The chain runs to 210 residues: Imidazole glycerol phosphate synthase subunit HisH (210 aa).

Residues 7 to 210 (KVVIIDTGCA…SQLIKNFLEM (204 aa)) enclose the Glutamine amidotransferase type-1 domain. C82 functions as the Nucleophile in the catalytic mechanism. Residues H192 and E194 contribute to the active site.

Heterodimer of HisH and HisF.

The protein localises to the cytoplasm. It carries out the reaction 5-[(5-phospho-1-deoxy-D-ribulos-1-ylimino)methylamino]-1-(5-phospho-beta-D-ribosyl)imidazole-4-carboxamide + L-glutamine = D-erythro-1-(imidazol-4-yl)glycerol 3-phosphate + 5-amino-1-(5-phospho-beta-D-ribosyl)imidazole-4-carboxamide + L-glutamate + H(+). It catalyses the reaction L-glutamine + H2O = L-glutamate + NH4(+). It functions in the pathway amino-acid biosynthesis; L-histidine biosynthesis; L-histidine from 5-phospho-alpha-D-ribose 1-diphosphate: step 5/9. Its function is as follows. IGPS catalyzes the conversion of PRFAR and glutamine to IGP, AICAR and glutamate. The HisH subunit catalyzes the hydrolysis of glutamine to glutamate and ammonia as part of the synthesis of IGP and AICAR. The resulting ammonia molecule is channeled to the active site of HisF. The protein is Imidazole glycerol phosphate synthase subunit HisH of Photobacterium profundum (strain SS9).